A 273-amino-acid polypeptide reads, in one-letter code: Dermonecrotic toxin LarSicTox-alphaIB1b (273 aa).

Histidine 5 is an active-site residue. Positions 25 and 27 each coordinate Mg(2+). The Nucleophile role is filled by histidine 41. 2 disulfide bridges follow: cysteine 45–cysteine 51 and cysteine 47–cysteine 190. A Mg(2+)-binding site is contributed by aspartate 85. A glycan (N-linked (GlcNAc...) asparagine) is linked at asparagine 250.

Belongs to the arthropod phospholipase D family. Class II subfamily. The cofactor is Mg(2+). Expressed by the venom gland.

Its subcellular location is the secreted. The catalysed reaction is an N-(acyl)-sphingosylphosphocholine = an N-(acyl)-sphingosyl-1,3-cyclic phosphate + choline. The enzyme catalyses an N-(acyl)-sphingosylphosphoethanolamine = an N-(acyl)-sphingosyl-1,3-cyclic phosphate + ethanolamine. It carries out the reaction a 1-acyl-sn-glycero-3-phosphocholine = a 1-acyl-sn-glycero-2,3-cyclic phosphate + choline. It catalyses the reaction a 1-acyl-sn-glycero-3-phosphoethanolamine = a 1-acyl-sn-glycero-2,3-cyclic phosphate + ethanolamine. In terms of biological role, dermonecrotic toxins cleave the phosphodiester linkage between the phosphate and headgroup of certain phospholipids (sphingolipid and lysolipid substrates), forming an alcohol (often choline) and a cyclic phosphate. This toxin acts on sphingomyelin (SM). It may also act on ceramide phosphoethanolamine (CPE), lysophosphatidylcholine (LPC) and lysophosphatidylethanolamine (LPE), but not on lysophosphatidylserine (LPS), and lysophosphatidylglycerol (LPG). It acts by transphosphatidylation, releasing exclusively cyclic phosphate products as second products. Induces dermonecrosis, hemolysis, increased vascular permeability, edema, inflammatory response, and platelet aggregation. This is Dermonecrotic toxin LarSicTox-alphaIB1b from Loxosceles arizonica (Arizona brown spider).